The following is a 384-amino-acid chain: Magnesium transporter MRS2-I (384 aa).

2 consecutive transmembrane segments (helical) span residues 319–339 (LFLS…GIFG) and 356–376 (WVVL…VAYA). The short motif at 339–341 (GMN) is the Required for magnesium transport activity element.

It belongs to the CorA metal ion transporter (MIT) (TC 1.A.35.5) family.

The protein resides in the membrane. Magnesium transporter that may mediate the influx of magnesium. This is Magnesium transporter MRS2-I (MRS2-I) from Oryza sativa subsp. japonica (Rice).